We begin with the raw amino-acid sequence, 279 residues long: Diaminopimelate epimerase (279 aa).

Residues Asn-12, Gln-45, and Asn-65 each contribute to the substrate site. Cys-74 functions as the Proton donor in the catalytic mechanism. Residues 75–76 (GN), Asn-162, Asn-195, and 213–214 (ER) each bind substrate. Residue Cys-222 is the Proton acceptor of the active site. A substrate-binding site is contributed by 223–224 (GT).

Belongs to the diaminopimelate epimerase family. Homodimer.

The protein resides in the cytoplasm. It catalyses the reaction (2S,6S)-2,6-diaminopimelate = meso-2,6-diaminopimelate. It participates in amino-acid biosynthesis; L-lysine biosynthesis via DAP pathway; DL-2,6-diaminopimelate from LL-2,6-diaminopimelate: step 1/1. Catalyzes the stereoinversion of LL-2,6-diaminopimelate (L,L-DAP) to meso-diaminopimelate (meso-DAP), a precursor of L-lysine and an essential component of the bacterial peptidoglycan. This is Diaminopimelate epimerase from Shewanella woodyi (strain ATCC 51908 / MS32).